Consider the following 225-residue polypeptide: UPF0758 protein BCE33L4198 (225 aa).

The 123-residue stretch at 103–225 (SIRNPEDCAR…FVSLKEKGHI (123 aa)) folds into the MPN domain. Histidine 174, histidine 176, and aspartate 187 together coordinate Zn(2+). The JAMM motif signature appears at 174-187 (HNHPSGDPAPSRED).

It belongs to the UPF0758 family.

In Bacillus cereus (strain ZK / E33L), this protein is UPF0758 protein BCE33L4198.